The primary structure comprises 222 residues: Putative ankyrin repeat protein L36 (222 aa).

7 ANK repeats span residues 1-14 (MVKY…NVDA), 15-44 (QNSR…NIYA), 45-74 (NDNH…NIRA), 76-104 (EDSA…TNYE), 105-134 (YSDY…KITD), 136-161 (AMFM…SLPC), and 163-191 (SYSE…KINK).

This is Putative ankyrin repeat protein L36 from Acanthamoeba polyphaga (Amoeba).